The primary structure comprises 403 residues: Tyrosine--tRNA ligase (403 aa).

Positions 42 to 51 match the 'HIGH' region motif; that stretch reads PTAPDLHLGH. The 'KMSKS' region signature appears at 226 to 230; the sequence is KMSKS. K229 contacts ATP. The 62-residue stretch at 339-400 folds into the S4 RNA-binding domain; it reads LRIASLLTAA…GKRNFARVAL (62 aa).

It belongs to the class-I aminoacyl-tRNA synthetase family. TyrS type 2 subfamily. Homodimer.

The protein resides in the cytoplasm. The enzyme catalyses tRNA(Tyr) + L-tyrosine + ATP = L-tyrosyl-tRNA(Tyr) + AMP + diphosphate + H(+). Catalyzes the attachment of tyrosine to tRNA(Tyr) in a two-step reaction: tyrosine is first activated by ATP to form Tyr-AMP and then transferred to the acceptor end of tRNA(Tyr). The polypeptide is Tyrosine--tRNA ligase (Xanthomonas campestris pv. campestris (strain ATCC 33913 / DSM 3586 / NCPPB 528 / LMG 568 / P 25)).